The following is a 297-amino-acid chain: Large ribosomal subunit protein uL18 (297 aa).

Position 2 is an N-acetylglycine (Gly-2). 2 positions are modified to N6-acetyllysine: Lys-5 and Lys-48. Ser-185 is modified (phosphoserine). Lys-220 is subject to N6-acetyllysine; alternate. Lys-220 participates in a covalent cross-link: Glycyl lysine isopeptide (Lys-Gly) (interchain with G-Cter in SUMO1); alternate. A Glycyl lysine isopeptide (Lys-Gly) (interchain with G-Cter in SUMO2); alternate cross-link involves residue Lys-220. Position 232 is a phosphothreonine (Thr-232). Residues 253 to 297 form a disordered region; sequence YEKKPKREVKKKRWNRPKMSLAQKKDRVAQKKASFLRAQERAAES. A compositionally biased stretch (basic residues) spans 258 to 268; the sequence is KREVKKKRWNR. Residue Ser-272 is modified to Phosphoserine.

The protein belongs to the universal ribosomal protein uL18 family. In terms of assembly, component of the large ribosomal subunit (LSU). Part of the 5S RNP complex, which is a LSU subcomplex composed of the 5S RNA, RPL5 and RPL11. Component of a hexameric 5S RNP precursor complex, composed of 5S RNA, RRS1, RPF2/BXDC1, RPL5, RPL11 and HEATR3; this complex acts as a precursor for ribosome assembly. Interacts with isoform 1 of NVL in an ATP-dependent manner. Interacts with RRP1B. Interacts with IPO5, IPO7 and KPNB1; these interactions may be involved in RPL5 nuclear import for the assembly of ribosomal subunits.

The protein resides in the cytoplasm. It localises to the nucleus. The protein localises to the nucleolus. Component of the ribosome, a large ribonucleoprotein complex responsible for the synthesis of proteins in the cell. The small ribosomal subunit (SSU) binds messenger RNAs (mRNAs) and translates the encoded message by selecting cognate aminoacyl-transfer RNA (tRNA) molecules. The large subunit (LSU) contains the ribosomal catalytic site termed the peptidyl transferase center (PTC), which catalyzes the formation of peptide bonds, thereby polymerizing the amino acids delivered by tRNAs into a polypeptide chain. The nascent polypeptides leave the ribosome through a tunnel in the LSU and interact with protein factors that function in enzymatic processing, targeting, and the membrane insertion of nascent chains at the exit of the ribosomal tunnel. As part of the 5S RNP/5S ribonucleoprotein particle it is an essential component of the LSU, required for its formation and the maturation of rRNAs. It also couples ribosome biogenesis to p53/TP53 activation. As part of the 5S RNP it accumulates in the nucleoplasm and inhibits MDM2, when ribosome biogenesis is perturbed, mediating the stabilization and the activation of TP53. The sequence is that of Large ribosomal subunit protein uL18 (RPL5) from Oryctolagus cuniculus (Rabbit).